Here is a 181-residue protein sequence, read N- to C-terminus: uncharacterized protein (181 aa).

Residues 126 to 148 (SYKDKEEEEDEDPEEDDDDPRVQ) are disordered. Over residues 131–144 (EEEEDEDPEEDDDD) the composition is skewed to acidic residues.

It belongs to the chlamydial CPn_0422/CT_273/TC_0545 family.

This is an uncharacterized protein from Chlamydia pneumoniae (Chlamydophila pneumoniae).